The primary structure comprises 444 residues: Phosphoglucosamine mutase (444 aa).

Ser102 (phosphoserine intermediate) is an active-site residue. 4 residues coordinate Mg(2+): Ser102, Asp241, Asp243, and Asp245. At Ser102 the chain carries Phosphoserine.

The protein belongs to the phosphohexose mutase family. It depends on Mg(2+) as a cofactor. Post-translationally, activated by phosphorylation.

It catalyses the reaction alpha-D-glucosamine 1-phosphate = D-glucosamine 6-phosphate. In terms of biological role, catalyzes the conversion of glucosamine-6-phosphate to glucosamine-1-phosphate. The chain is Phosphoglucosamine mutase from Acidovorax ebreus (strain TPSY) (Diaphorobacter sp. (strain TPSY)).